The sequence spans 399 residues: Elongation factor Tu (399 aa).

The region spanning 10 to 209 is the tr-type G domain; the sequence is KPHVNIGTIG…AVDDYIPTPV (200 aa). Positions 19 to 26 are G1; it reads GHVDHGKT. 19–26 provides a ligand contact to GTP; that stretch reads GHVDHGKT. Mg(2+) is bound at residue Thr26. The G2 stretch occupies residues 62–66; it reads GITIN. The interval 83-86 is G3; that stretch reads DCPG. Residues 83–87 and 138–141 contribute to the GTP site; these read DCPGH and NKCD. Residues 138 to 141 are G4; sequence NKCD. Residues 175-177 form a G5 region; that stretch reads SAY.

It belongs to the TRAFAC class translation factor GTPase superfamily. Classic translation factor GTPase family. EF-Tu/EF-1A subfamily. Monomer.

The protein resides in the cytoplasm. It carries out the reaction GTP + H2O = GDP + phosphate + H(+). In terms of biological role, GTP hydrolase that promotes the GTP-dependent binding of aminoacyl-tRNA to the A-site of ribosomes during protein biosynthesis. The polypeptide is Elongation factor Tu (Bifidobacterium longum (strain DJO10A)).